We begin with the raw amino-acid sequence, 338 residues long: ABC transporter I family member 6, chloroplastic (338 aa).

The transit peptide at 1–66 (MAGVNLQLRH…RTTRRSVIVS (66 aa)) directs the protein to the chloroplast. The ABC transporter domain occupies 92–338 (LEVRDLRAVI…EKEGYKAISG (247 aa)). Residue 126-133 (GKNGSGKS) coordinates ATP.

It belongs to the ABC transporter superfamily. ABCI family. In terms of assembly, interacts with NAP6. Present in all organs, with higher levels in aerial parts.

It localises to the plastid. The protein resides in the chloroplast. Essential protein. Required during embryo development, especially at early stages. Involved in chloroplast differentiation. The sequence is that of ABC transporter I family member 6, chloroplastic (ABCI6) from Arabidopsis thaliana (Mouse-ear cress).